Consider the following 562-residue polypeptide: Probable ganciclovir kinase (562 aa).

A compositionally biased stretch (polar residues) spans 1 to 16 (MDNGVETPQGQKTQPI). Residues 1-32 (MDNGVETPQGQKTQPINLPPVRKKLRKHEGLG) are disordered. ATP contacts are provided by residues 201 to 209 (LGVGAYGKV) and K218. D313 functions as the Proton acceptor in the catalytic mechanism.

Belongs to the protein kinase superfamily. Tyr protein kinase family. HCMV ganciclovir subfamily.

In terms of biological role, phosphorylates the antiviral nucleoside analog ganciclovir. This chain is Probable ganciclovir kinase (U69), found in Homo sapiens (Human).